A 278-amino-acid chain; its full sequence is Transmembrane protein 45B (278 aa).

The next 7 helical transmembrane spans lie at 7 to 27 (HALP…KYPL), 49 to 69 (IIEG…EQFV), 95 to 115 (YLFF…FHIV), 117 to 137 (LGLD…LFYF), 149 to 169 (IHSL…LEVI), 183 to 203 (LLIL…PPFG), and 215 to 235 (IMFI…IVAI). S273 and S275 each carry phosphoserine.

Belongs to the TMEM45 family.

It is found in the endosome membrane. Its subcellular location is the lysosome membrane. It localises to the golgi apparatus. The protein localises to the trans-Golgi network membrane. Its function is as follows. Plays a role in innate immunity. This Mus musculus (Mouse) protein is Transmembrane protein 45B (Tmem45b).